A 530-amino-acid chain; its full sequence is Type 2 DNA topoisomerase 6 subunit B (530 aa).

ATP contacts are provided by residues N42, D76, 97 to 98, 106 to 113, and K427; these read SK and GMYGLGVK.

It belongs to the TOP6B family. In terms of assembly, homodimer. Heterotetramer of two Top6A and two Top6B chains.

The catalysed reaction is ATP-dependent breakage, passage and rejoining of double-stranded DNA.. Relaxes both positive and negative superturns and exhibits a strong decatenase activity. The chain is Type 2 DNA topoisomerase 6 subunit B from Saccharolobus solfataricus (strain ATCC 35092 / DSM 1617 / JCM 11322 / P2) (Sulfolobus solfataricus).